The sequence spans 508 residues: MLO-like protein 3 (508 aa).

The Extracellular portion of the chain corresponds to 1–21; it reads MTDKEESNHSSEVGAVRSLQE. Residues 22–42 traverse the membrane as a helical segment; it reads TPTWALATVCFFFIAVSICLE. At 43–68 the chain is on the cytoplasmic side; that stretch reads RLINLLSTRLKKNRKTSLLEAVEKLK. The chain crosses the membrane as a helical span at residues 69-89; sequence SVLMVLGFMSLMLNVTEGEVS. The Extracellular segment spans residues 90–153; that stretch reads KICIPIKYAN…SEEGLTQLSY (64 aa). A helical transmembrane segment spans residues 154–174; it reads FFFVLACMHILCNLAILLLGM. The Cytoplasmic segment spans residues 175-275; that stretch reads AKMRKWNSWE…IQRSLHEDFK (101 aa). The helical transmembrane segment at 276–296 threads the bilayer; the sequence is TVVGISPLMWLTVVIFMLLDV. Residues 297–304 lie on the Extracellular side of the membrane; the sequence is SGWRVYFY. A helical membrane pass occupies residues 305–325; that stretch reads MSFVPLIIVLVIGTKLEMIVA. Residues 326 to 357 are Cytoplasmic-facing; sequence KMAVTIKENNSVIRGTPLVESNDTHFWFSNPR. A helical transmembrane segment spans residues 358–378; the sequence is FLLSILHYTLFLNTFEMAFIV. Topologically, residues 379-401 are extracellular; sequence WITWQFGINSCYHDNQGIIITRL. Residues 402–422 form a helical membrane-spanning segment; that stretch reads VLAVTVQFLSSYITLPLYAIV. Topologically, residues 423–508 are cytoplasmic; that stretch reads TQMGSSYKRA…EIQIQEKTER (86 aa). The segment at 436-457 is calmodulin-binding; the sequence is EQLANVLRHWQGMVRDKKKTIQ. Positions 453–492 are disordered; sequence KKTIQTPDTDNNSNNNNGDIDSGESPVQTEVASEFRFSGR. Ser494 is subject to Phosphoserine.

Belongs to the MLO family.

It is found in the membrane. May be involved in modulation of pathogen defense and leaf cell death. Activity seems to be regulated by Ca(2+)-dependent calmodulin binding and seems not to require heterotrimeric G proteins. The protein is MLO-like protein 3 (MLO3) of Arabidopsis thaliana (Mouse-ear cress).